Consider the following 296-residue polypeptide: 4-hydroxy-tetrahydrodipicolinate synthase (296 aa).

Residue Thr49 participates in pyruvate binding. The active-site Proton donor/acceptor is the Tyr137. The Schiff-base intermediate with substrate role is filled by Lys166. Ile208 lines the pyruvate pocket.

Belongs to the DapA family. Homotetramer; dimer of dimers.

The protein resides in the cytoplasm. It carries out the reaction L-aspartate 4-semialdehyde + pyruvate = (2S,4S)-4-hydroxy-2,3,4,5-tetrahydrodipicolinate + H2O + H(+). It participates in amino-acid biosynthesis; L-lysine biosynthesis via DAP pathway; (S)-tetrahydrodipicolinate from L-aspartate: step 3/4. In terms of biological role, catalyzes the condensation of (S)-aspartate-beta-semialdehyde [(S)-ASA] and pyruvate to 4-hydroxy-tetrahydrodipicolinate (HTPA). The polypeptide is 4-hydroxy-tetrahydrodipicolinate synthase (Azobacteroides pseudotrichonymphae genomovar. CFP2).